Reading from the N-terminus, the 148-residue chain is MPPNRLLLPKMRLWGLLPFLVPFILLWSIQEPALAEGVFIRTCPKYNKIKCDFEERNQCLRHRECPGEERCCLFACGRKCLDLSEDICSLPQDAGPCLAYLPRWWYNQDTKLCIEFIYGGCQGNPNNFESKAVCTSICINKRKMSSWI.

Residues 1–35 (MPPNRLLLPKMRLWGLLPFLVPFILLWSIQEPALA) form the signal peptide. In terms of domain architecture, WAP spans 37-84 (GVFIRTCPKYNKIKCDFEERNQCLRHRECPGEERCCLFACGRKCLDLS). 7 disulfides stabilise this stretch: Cys43–Cys72, Cys51–Cys76, Cys59–Cys71, Cys65–Cys80, Cys88–Cys138, Cys97–Cys121, and Cys113–Cys134. The region spanning 88 to 138 (CSLPQDAGPCLAYLPRWWYNQDTKLCIEFIYGGCQGNPNNFESKAVCTSIC) is the BPTI/Kunitz inhibitor domain.

It localises to the secreted. This is WAP four-disulfide core domain protein 6B (Wfdc6b) from Mus musculus (Mouse).